The sequence spans 283 residues: Bifunctional protein FolD (283 aa).

NADP(+) contacts are provided by residues 166-168 (GAS) and Ile232.

This sequence belongs to the tetrahydrofolate dehydrogenase/cyclohydrolase family. Homodimer.

The catalysed reaction is (6R)-5,10-methylene-5,6,7,8-tetrahydrofolate + NADP(+) = (6R)-5,10-methenyltetrahydrofolate + NADPH. It carries out the reaction (6R)-5,10-methenyltetrahydrofolate + H2O = (6R)-10-formyltetrahydrofolate + H(+). It functions in the pathway one-carbon metabolism; tetrahydrofolate interconversion. Its function is as follows. Catalyzes the oxidation of 5,10-methylenetetrahydrofolate to 5,10-methenyltetrahydrofolate and then the hydrolysis of 5,10-methenyltetrahydrofolate to 10-formyltetrahydrofolate. This is Bifunctional protein FolD from Hamiltonella defensa subsp. Acyrthosiphon pisum (strain 5AT).